The sequence spans 148 residues: Large ribosomal subunit protein uL15 (148 aa).

Basic and acidic residues predominate over residues 1–10; that stretch reads MQLHNLEYKK. The tract at residues 1–42 is disordered; the sequence is MQLHNLEYKKGSRNHKEKRVGRGHGSGLGKTSGRGQDGQKAR. The span at 11 to 22 shows a compositional bias: basic residues; the sequence is GSRNHKEKRVGR. Over residues 23-36 the composition is skewed to gly residues; that stretch reads GHGSGLGKTSGRGQ.

It belongs to the universal ribosomal protein uL15 family. As to quaternary structure, part of the 50S ribosomal subunit.

Binds to the 23S rRNA. The chain is Large ribosomal subunit protein uL15 from Ureaplasma urealyticum serovar 10 (strain ATCC 33699 / Western).